A 532-amino-acid chain; its full sequence is FAD-dependent monooxygenase hkm7 (532 aa).

FAD contacts are provided by residues 191–193 and aspartate 261; that span reads RIY.

Belongs to the PheA/TfdB FAD monooxygenase family.

It participates in secondary metabolite biosynthesis. Functionally, FAD-dependent monooxygenase; part of the gene cluster that mediates the biosynthesis of hancockiamides, an unusual new family of N-cinnamoylated piperazines. The NRPS hkm10 and the NmrA-like reductase hkm9 are proposed to convert two molecules of L-Phe to the intermediary piperazine called xenocockiamide A. Xenocockiamide A is then converted to hancockiamide D via a series of hydroxylations and O-methylations. The tyrosinase hkm6 may catalyze an aromatic hydroxylation, then the 2-oxoglutarate-dependent Fe(II) dioxygenase hkm4 and the FAD-dependent phenol hydroxylase hkm7 may catalyze consecutive hydroxylations to install 2 more hydroxy groups, and the methyltransferase hkm8 probably catalyzes two methylations using 2 molecules of S-adenosyl-L-methionine (SAM). The NRPS hkm11 activates and transfers trans-cinnamate supplied by the PAL hkm12 to hancockiamide D and produces hancockiamide A. NRPS Hkm11 has the flexibility to tolerate the bulky hancockiamide G as a substrate and the absence of the acetyl-transferase hkm3 opens up the opportunity for hkm11 to introduce a second N-cinnamoyl moiety. The cytochrome P450 monooxygenase hkm5 catalyzes the methylenedioxy bridge formation, converting hancockiamide A into hancockiamide G. Hkm5 can also convert hancockiamide B into hancockiamide C, and hancockiamide D into hancockiamide H. The N-acetyltransferase hkm3 finally transfers an acetyl group to 1-N of piperazine, converting hancockiamide A into hancockiamide B and hancockiamide G into hancockiamide C. The chain is FAD-dependent monooxygenase hkm7 from Aspergillus hancockii.